A 321-amino-acid polypeptide reads, in one-letter code: Cytochrome c biogenesis protein CcsA (321 aa).

Transmembrane regions (helical) follow at residues Val17–Leu37, Thr48–Ile68, Leu71–Phe91, Leu98–Leu118, Met143–Ile163, Ile225–Asn245, Thr259–His273, and Ala286–Leu306.

Belongs to the CcmF/CycK/Ccl1/NrfE/CcsA family. May interact with Ccs1.

Its subcellular location is the plastid. It is found in the chloroplast thylakoid membrane. Its function is as follows. Required during biogenesis of c-type cytochromes (cytochrome c6 and cytochrome f) at the step of heme attachment. The chain is Cytochrome c biogenesis protein CcsA from Populus trichocarpa (Western balsam poplar).